Reading from the N-terminus, the 1011-residue chain is Unconventional myosin ID (1011 aa).

The 684-residue stretch at alanine 7 to asparagine 690 folds into the Myosin motor domain. Glycine 100 to threonine 107 is a binding site for ATP. Residues methionine 567–aspartate 589 form an actin-binding region. IQ domains are found at residues proline 694 to lysine 714 and methionine 716 to glutamine 736. The 202-residue stretch at alanine 806–alanine 1007 folds into the TH1 domain.

It belongs to the TRAFAC class myosin-kinesin ATPase superfamily. Myosin family. In terms of assembly, binds to F-actin. Interacts with arm. Interacts with shg. Interacts with ds (via intracellular region). In terms of tissue distribution, in the embryo, expressed in gastric caeca, midgut cells of the proventriculus, and in the mid and hindgut. In the larval gut brush border, expression is in the terminal web domain. In the adult gut brush border, expression remains in the web domain and has also moved into the microvilli. Also expressed at low levels in follicle cells during oogenesis.

The protein resides in the cytoplasm. It is found in the cell cortex. The protein localises to the cytoskeleton. Its subcellular location is the cell membrane. It localises to the cell junction. The protein resides in the adherens junction. It is found in the cell projection. Functionally, unconventional myosin that functions as actin-based motor protein with ATPase activity. Binds to membranes enriched in phosphatidylinositol 4-5-bisphosphate, and can glide along actin filaments when anchored to a lipid bilayer. Generates left-right asymmetry at the level of single cells, organs and the whole body via its interaction with the actin cytoskeleton, both in the embryo and the adult. Normal left-right asymmetry of the larval midgut and hindgut requires expression in the embryonic hindgut epithelium during a critical time period, 10 to 12.75 hours after egg laying. This period corresponds to a late stage of germband retraction, and precedes left-right asymmetric morphogenesis. Expression in segment H1 of the imaginal ring is required at 0 to 24 hours after pupation for changes of cell shape and orientation in the H2 segment, which then gives rise to normal, dextral looping of the adult hindgut. Required during a critical period, 126-132 hours after egg laying, for normal, dextral rotation of the adult male genitalia. Has a double role by promoting dextral rotation in the posterior compartment of segment A8 of the male genital disk, and in repressing sinistral looping in the anterior compartment. The chain is Unconventional myosin ID from Drosophila melanogaster (Fruit fly).